Reading from the N-terminus, the 739-residue chain is Transcription regulator protein BACH1 (739 aa).

The BTB domain maps to 34-100 (CDVTVLVEGQ…AYTAKLILSK (67 aa)). Residue Ser-196 is modified to Phosphoserine. Disordered stretches follow at residues 287–321 (MESE…PHGL) and 344–391 (KTVK…RSSV). Basic and acidic residues-rich tracts occupy residues 346–364 (VKTE…KPSE) and 376–391 (PKED…RSSV). Ser-448 is subject to Phosphoserine. The bZIP domain occupies 560 to 623 (CIHDIRRRSK…GETKQNLTGL (64 aa)). The segment at 565 to 581 (RRRSKNRIAAQRCRKRK) is basic motif. The tract at residues 585 to 592 (IQNLESEI) is leucine-zipper. A disordered region spans residues 679–708 (PPTAPPPCGRGSSAASQELVQESPPTTAAA). Residues 699-708 (QESPPTTAAA) show a composition bias toward low complexity.

It belongs to the bZIP family. CNC subfamily. Heterodimer of BACH1 and MAFK. In terms of processing, ubiquitinated by the SCF(FBXL17) complex or by the by the SCF(FBXO22) complex, leading to its degradation by the proteasome. Under oxidative stress, reactive oxygen species covalently modify cysteine residues on the bZIP domain of BACH1 and release it from chromatin. If the BTB domain of BACH1 remains intact, its beta1-alpha6 degron is recognized by FBXO22, promoting its ubiquitination and degradation. If the structural integrity of the beta1-alpha6 degron is compromised, FBXL17 will transiently associate with the BACH1 BTB dimer and remodel it into stably bound monomer for ubiquitination and degradation. As to expression, ubiquitous.

It localises to the nucleus. Functionally, transcriptional regulator that acts as a repressor or activator, depending on the context. Binds to NF-E2 DNA binding sites. Plays important roles in coordinating transcription activation and repression by MAFK. Together with MAF, represses the transcription of genes under the control of the NFE2L2 oxidative stress pathway. The polypeptide is Transcription regulator protein BACH1 (Bach1) (Mus musculus (Mouse)).